A 104-amino-acid polypeptide reads, in one-letter code: Ig lambda-2 chain C region (104 aa).

The Ig-like domain occupies 6–99 (PTLTVFPPSS…EGDTVEKSLS (94 aa)). Residues Cys27 and Cys85 are joined by a disulfide bond.

The protein is Ig lambda-2 chain C region (Iglc2) of Mus musculus (Mouse).